Here is an 808-residue protein sequence, read N- to C-terminus: Quinoprotein glucose dehydrogenase (808 aa).

The N-terminal stretch at M1–A33 is a signal peptide. 4 helical membrane-spanning segments follow: residues I35–L54, N59–W76, I94–S108, and G123–T138. The active-site Proton acceptor is D470. Positions V514–K545 are disordered. The span at T531–T541 shows a compositional bias: polar residues.

Belongs to the bacterial PQQ dehydrogenase family. Pyrroloquinoline quinone is required as a cofactor.

It localises to the cell inner membrane. The catalysed reaction is a ubiquinone + D-glucose = D-glucono-1,5-lactone + a ubiquinol. This chain is Quinoprotein glucose dehydrogenase (gdh), found in Gluconobacter oxydans (strain 621H) (Gluconobacter suboxydans).